The primary structure comprises 157 residues: Small ribosomal subunit protein uS7 (157 aa).

The protein belongs to the universal ribosomal protein uS7 family. Part of the 30S ribosomal subunit. Contacts proteins S9 and S11.

One of the primary rRNA binding proteins, it binds directly to 16S rRNA where it nucleates assembly of the head domain of the 30S subunit. Is located at the subunit interface close to the decoding center, probably blocks exit of the E-site tRNA. The sequence is that of Small ribosomal subunit protein uS7 from Hydrogenovibrio crunogenus (strain DSM 25203 / XCL-2) (Thiomicrospira crunogena).